The primary structure comprises 177 residues: Probable inosine/xanthosine triphosphatase (177 aa).

The protein belongs to the YjjX NTPase family. Homodimer. Requires Mg(2+) as cofactor. It depends on Mn(2+) as a cofactor.

It catalyses the reaction XTP + H2O = XDP + phosphate + H(+). It carries out the reaction ITP + H2O = IDP + phosphate + H(+). Its function is as follows. Phosphatase that hydrolyzes non-canonical purine nucleotides such as XTP and ITP to their respective diphosphate derivatives. Probably excludes non-canonical purines from DNA/RNA precursor pool, thus preventing their incorporation into DNA/RNA and avoiding chromosomal lesions. In Halalkalibacterium halodurans (strain ATCC BAA-125 / DSM 18197 / FERM 7344 / JCM 9153 / C-125) (Bacillus halodurans), this protein is Probable inosine/xanthosine triphosphatase.